Consider the following 495-residue polypeptide: Protein painting of fourth (495 aa).

The disordered stretch occupies residues 1–51 (MDSKRAALESGDGPDAKRLDTTDDQDKEASGGDGSQVMLAKHVAPYTGHGC). Residues 215 to 289 (CSLYVGNIPF…RTLTVRYRRL (75 aa)) form the RRM domain. Residues 332–342 (ISDSDNCSDSS) show a composition bias toward low complexity. Disordered stretches follow at residues 332-358 (ISDS…INEQ), 432-451 (PVPA…KKAK), and 461-495 (GPFR…DPDP). Residues 345–358 (GKEDGKRKKKINEQ) show a composition bias toward basic and acidic residues. Positions 351–367 (RKKKINEQEREIEKLKR) match the Bipartite nuclear localization signal motif. Over residues 472–495 (TADEYEKDDRLEELYAQLERDPDP) the composition is skewed to basic and acidic residues.

As to quaternary structure, interacts with Zeste. In terms of tissue distribution, weakly expressed in embryos. Expression increases during larval and pupal stages. In adults, it is predominantly expressed in males, while it is weakly expressed in females.

The protein resides in the nucleus. The protein localises to the chromosome. Probable RNA-binding protein that specifically binds to the fourth chromosome and may bind an RNA that spreads the fourth chromosome. May be a reminiscence of X chromosome dosage compensation of ancestral Drosophila species in which the X and the fourth chromosomes are one single chromosome. This chain is Protein painting of fourth (Pof), found in Drosophila melanogaster (Fruit fly).